Consider the following 639-residue polypeptide: Chaperone protein DnaK (639 aa).

Phosphothreonine; by autocatalysis is present on threonine 198. The segment covering 603 to 618 (AKAQTQGGAQEGAAKQ) has biased composition (low complexity). Positions 603-639 (AKAQTQGGAQEGAAKQSNATADDVVDAEFEEVKDDKK) are disordered. Residues 625–639 (DVVDAEFEEVKDDKK) are compositionally biased toward acidic residues.

It belongs to the heat shock protein 70 family.

Acts as a chaperone. The chain is Chaperone protein DnaK from Shewanella sp. (strain MR-4).